The chain runs to 161 residues: Nucleotide-binding protein lpg1167 (161 aa).

Belongs to the YajQ family.

Its function is as follows. Nucleotide-binding protein. This is Nucleotide-binding protein lpg1167 from Legionella pneumophila subsp. pneumophila (strain Philadelphia 1 / ATCC 33152 / DSM 7513).